Reading from the N-terminus, the 142-residue chain is Prefoldin subunit alpha (142 aa).

This sequence belongs to the prefoldin subunit alpha family. As to quaternary structure, heterohexamer of two alpha and four beta subunits.

The protein localises to the cytoplasm. In terms of biological role, molecular chaperone capable of stabilizing a range of proteins. Seems to fulfill an ATP-independent, HSP70-like function in archaeal de novo protein folding. The chain is Prefoldin subunit alpha from Methanosarcina acetivorans (strain ATCC 35395 / DSM 2834 / JCM 12185 / C2A).